The primary structure comprises 107 residues: L-rhamnose mutarotase (107 aa).

Position 18 (Tyr18) interacts with substrate. His22 acts as the Proton donor in catalysis. Substrate is bound by residues Tyr41 and 76-77; that span reads WW.

This sequence belongs to the rhamnose mutarotase family. As to quaternary structure, homodimer.

The protein localises to the cytoplasm. It carries out the reaction alpha-L-rhamnose = beta-L-rhamnose. The protein operates within carbohydrate metabolism; L-rhamnose metabolism. Its function is as follows. Involved in the anomeric conversion of L-rhamnose. In Paraburkholderia phytofirmans (strain DSM 17436 / LMG 22146 / PsJN) (Burkholderia phytofirmans), this protein is L-rhamnose mutarotase.